Here is a 438-residue protein sequence, read N- to C-terminus: Serine hydroxymethyltransferase (438 aa).

133-135 (GHI) contributes to the (6S)-5,6,7,8-tetrahydrofolate binding site. Lys-239 carries the post-translational modification N6-(pyridoxal phosphate)lysine.

It belongs to the SHMT family. As to quaternary structure, homodimer. Pyridoxal 5'-phosphate serves as cofactor.

Its subcellular location is the cytoplasm. The enzyme catalyses 5,10-methylenetetrahydromethanopterin + glycine + H2O = 5,6,7,8-tetrahydromethanopterin + L-serine. It participates in amino-acid biosynthesis; glycine biosynthesis; glycine from L-serine: step 1/1. In terms of biological role, catalyzes the reversible interconversion of serine and glycine with tetrahydromethanopterin (H4MPT) serving as the one-carbon carrier. Also exhibits a pteridine-independent aldolase activity toward beta-hydroxyamino acids, producing glycine and aldehydes, via a retro-aldol mechanism. This is Serine hydroxymethyltransferase from Archaeoglobus fulgidus (strain ATCC 49558 / DSM 4304 / JCM 9628 / NBRC 100126 / VC-16).